The chain runs to 106 residues: DNA-directed RNA polymerase subunit omega (106 aa).

The disordered stretch occupies residues 76 to 106 (REPAREAAEPAGEAPEEQQRAAGEREDQGAA). The segment covering 92-106 (EQQRAAGEREDQGAA) has biased composition (basic and acidic residues).

The protein belongs to the RNA polymerase subunit omega family. The RNAP catalytic core consists of 2 alpha, 1 beta, 1 beta' and 1 omega subunit. When a sigma factor is associated with the core the holoenzyme is formed, which can initiate transcription.

It carries out the reaction RNA(n) + a ribonucleoside 5'-triphosphate = RNA(n+1) + diphosphate. In terms of biological role, promotes RNA polymerase assembly. Latches the N- and C-terminal regions of the beta' subunit thereby facilitating its interaction with the beta and alpha subunits. The sequence is that of DNA-directed RNA polymerase subunit omega from Rubrobacter xylanophilus (strain DSM 9941 / JCM 11954 / NBRC 16129 / PRD-1).